A 179-amino-acid polypeptide reads, in one-letter code: Large ribosomal subunit protein uL6 (179 aa).

Belongs to the universal ribosomal protein uL6 family. Part of the 50S ribosomal subunit.

Functionally, this protein binds to the 23S rRNA, and is important in its secondary structure. It is located near the subunit interface in the base of the L7/L12 stalk, and near the tRNA binding site of the peptidyltransferase center. The sequence is that of Large ribosomal subunit protein uL6 from Koribacter versatilis (strain Ellin345).